A 141-amino-acid chain; its full sequence is Nucleoside triphosphatase NudI (141 aa).

The 141-residue stretch at 1–141 (MRQRTIVCPL…RKTLRLKGLL (141 aa)) folds into the Nudix hydrolase domain. Positions 38–59 (GGVEPGERIEEALRREIREELG) match the Nudix box motif.

It belongs to the Nudix hydrolase family. NudI subfamily. As to quaternary structure, monomer. Requires Mg(2+) as cofactor.

It carries out the reaction a ribonucleoside 5'-triphosphate + H2O = a ribonucleoside 5'-phosphate + diphosphate + H(+). The catalysed reaction is a 2'-deoxyribonucleoside 5'-triphosphate + H2O = a 2'-deoxyribonucleoside 5'-phosphate + diphosphate + H(+). The enzyme catalyses dUTP + H2O = dUMP + diphosphate + H(+). It catalyses the reaction dTTP + H2O = dTMP + diphosphate + H(+). It carries out the reaction dCTP + H2O = dCMP + diphosphate + H(+). In terms of biological role, catalyzes the hydrolysis of nucleoside triphosphates, with a preference for pyrimidine deoxynucleoside triphosphates (dUTP, dTTP and dCTP). This Escherichia coli (strain ATCC 8739 / DSM 1576 / NBRC 3972 / NCIMB 8545 / WDCM 00012 / Crooks) protein is Nucleoside triphosphatase NudI.